A 195-amino-acid polypeptide reads, in one-letter code: MALTPTFSRAPDIAPAPKGIIDPATGRPIGANDPTFLSISSELADRGFLVTSADELINWARTGSLMWMTFGLACCAVEMMQMSMPRYDCERFGFAPRGSPRQSDVMIVAGTLTNKMAPALRKVYDQMPEPRYVISMGSCANGGGYYHYSYSVVRGCDRVVPVDIYVPGCPPSAEALLYGVLLLQRKIRRTGTIER.

Residues Cys74, Cys75, Cys139, and Cys169 each coordinate [4Fe-4S] cluster.

The protein belongs to the complex I 20 kDa subunit family. NDH-1 is composed of 14 different subunits. Subunits NuoB, C, D, E, F, and G constitute the peripheral sector of the complex. The cofactor is [4Fe-4S] cluster.

The protein localises to the cell inner membrane. The catalysed reaction is a quinone + NADH + 5 H(+)(in) = a quinol + NAD(+) + 4 H(+)(out). Functionally, NDH-1 shuttles electrons from NADH, via FMN and iron-sulfur (Fe-S) centers, to quinones in the respiratory chain. The immediate electron acceptor for the enzyme in this species is believed to be ubiquinone. Couples the redox reaction to proton translocation (for every two electrons transferred, four hydrogen ions are translocated across the cytoplasmic membrane), and thus conserves the redox energy in a proton gradient. This Methylorubrum populi (strain ATCC BAA-705 / NCIMB 13946 / BJ001) (Methylobacterium populi) protein is NADH-quinone oxidoreductase subunit B.